Reading from the N-terminus, the 571-residue chain is Proline--tRNA ligase (571 aa).

Belongs to the class-II aminoacyl-tRNA synthetase family. ProS type 1 subfamily. In terms of assembly, homodimer.

Its subcellular location is the cytoplasm. It catalyses the reaction tRNA(Pro) + L-proline + ATP = L-prolyl-tRNA(Pro) + AMP + diphosphate. Its function is as follows. Catalyzes the attachment of proline to tRNA(Pro) in a two-step reaction: proline is first activated by ATP to form Pro-AMP and then transferred to the acceptor end of tRNA(Pro). As ProRS can inadvertently accommodate and process non-cognate amino acids such as alanine and cysteine, to avoid such errors it has two additional distinct editing activities against alanine. One activity is designated as 'pretransfer' editing and involves the tRNA(Pro)-independent hydrolysis of activated Ala-AMP. The other activity is designated 'posttransfer' editing and involves deacylation of mischarged Ala-tRNA(Pro). The misacylated Cys-tRNA(Pro) is not edited by ProRS. This chain is Proline--tRNA ligase, found in Pseudomonas aeruginosa (strain UCBPP-PA14).